The following is a 112-amino-acid chain: UPF0060 membrane protein SAV_4756 (112 aa).

A run of 4 helical transmembrane segments spans residues 8–28, 33–53, 62–82, and 91–111; these read ALFV…WQGV, GWLW…VATL, ILAA…MVAD, and VTGA…PRGG.

It belongs to the UPF0060 family.

The protein localises to the cell membrane. This chain is UPF0060 membrane protein SAV_4756, found in Streptomyces avermitilis (strain ATCC 31267 / DSM 46492 / JCM 5070 / NBRC 14893 / NCIMB 12804 / NRRL 8165 / MA-4680).